Consider the following 231-residue polypeptide: Cytidylate kinase (231 aa).

18–26 (GPSGTGKSS) contributes to the ATP binding site.

Belongs to the cytidylate kinase family. Type 1 subfamily.

The protein resides in the cytoplasm. The catalysed reaction is CMP + ATP = CDP + ADP. The enzyme catalyses dCMP + ATP = dCDP + ADP. The polypeptide is Cytidylate kinase (Streptomyces coelicolor (strain ATCC BAA-471 / A3(2) / M145)).